A 472-amino-acid chain; its full sequence is Tryptophan--tRNA ligase, cytoplasmic (472 aa).

Positions 9–65 (SPLELFNSIATQGELVRSLKAGNASKDEIDSAVKMLLSLKMSYKAAMGEDYKANCPP) constitute a WHEP-TRS domain. Lysine 155 is modified (N6-succinyllysine). Residues 165–174 (PSSEAMHVGH) carry the 'HIGH' region motif. A 'KMSKS' region motif is present at residues 350 to 354 (KMSAS). Serine 352 carries the post-translational modification Phosphoserine.

This sequence belongs to the class-I aminoacyl-tRNA synthetase family. As to quaternary structure, homodimer. Interacts with oxidized form of GAPDH. Proteolytic cleavage generates 2 forms; T1-TrpRS and T2-TrpRS.

It is found in the cytoplasm. The enzyme catalyses tRNA(Trp) + L-tryptophan + ATP = L-tryptophyl-tRNA(Trp) + AMP + diphosphate + H(+). Catalyzes the attachment of tryptophan to tRNA(Trp) in a two-step reaction: tryptophan is first activated by ATP to form Trp-AMP and then transferred to the acceptor end of the tRNA(Trp). Could also possess an angiostatic activity. The polypeptide is Tryptophan--tRNA ligase, cytoplasmic (WARS1) (Pongo abelii (Sumatran orangutan)).